A 232-amino-acid polypeptide reads, in one-letter code: Large ribosomal subunit protein uL1 (232 aa).

Belongs to the universal ribosomal protein uL1 family. Part of the 50S ribosomal subunit.

Functionally, binds directly to 23S rRNA. The L1 stalk is quite mobile in the ribosome, and is involved in E site tRNA release. In terms of biological role, protein L1 is also a translational repressor protein, it controls the translation of the L11 operon by binding to its mRNA. The chain is Large ribosomal subunit protein uL1 from Cutibacterium acnes (strain DSM 16379 / KPA171202) (Propionibacterium acnes).